A 204-amino-acid chain; its full sequence is Peptide deformylase (204 aa).

Cys131 and His174 together coordinate Fe cation. The active site involves Glu175. Residue His178 coordinates Fe cation.

It belongs to the polypeptide deformylase family. Fe(2+) serves as cofactor.

The catalysed reaction is N-terminal N-formyl-L-methionyl-[peptide] + H2O = N-terminal L-methionyl-[peptide] + formate. Its function is as follows. Removes the formyl group from the N-terminal Met of newly synthesized proteins. Requires at least a dipeptide for an efficient rate of reaction. N-terminal L-methionine is a prerequisite for activity but the enzyme has broad specificity at other positions. The protein is Peptide deformylase of Streptococcus agalactiae serotype III (strain NEM316).